The primary structure comprises 389 residues: P2X purinoceptor 6 (389 aa).

Topologically, residues 1-45 (MQLQPAGTGNMASAAAAALVSWGFLDYKTEKYVLTRNCRVGVSQR) are cytoplasmic. Residues 46–66 (LLQLAVVVYVIGWALLAKKGY) form a helical membrane-spanning segment. The Extracellular segment spans residues 67–335 (QERDLAPQTS…LVTGQAGKFA (269 aa)). Cystine bridges form between Cys129–Cys179, Cys140–Cys163, and Cys146–Cys173. N-linked (GlcNAc...) asparagine glycosylation is found at Asn167, Asn197, and Asn212. 2 cysteine pairs are disulfide-bonded: Cys230–Cys240 and Cys274–Cys283. A helical transmembrane segment spans residues 336 to 356 (LIPTAITVGTGAAWLGMVTFL). At 357-389 (CDLLLLYVDREAGFYWRTKYEEARAPKTTTNSS) the chain is on the cytoplasmic side.

Belongs to the P2X receptor family. As to quaternary structure, unlike most P2RXs, P2RX6 does not seem to form homotrimers. P2RX6 are likely to form as obligate heteromers with other P2RXs subunits. Forms heterotrimer with P2RX2 with a variable subunit stoichiometry determined by subunit expression levels. Forms heterotrimer with P2RX4; functional differences between homomeric P2RX4 and P2RX4/6 heterotrimer are minor. Forms a P2RX2/P2RX4/P2RX6 heterotrimer. Interacts with SF3A1; resulting in a reduction of the splicing activity. In terms of processing, N-glycosylated. N-linked glycosylation can affect trafficking to the membrane and function. As to expression, predominantly expressed in skeletal muscle. Also expressed in lung.

Its subcellular location is the cell membrane. It is found in the endoplasmic reticulum. The protein resides in the nucleus. It localises to the nucleus inner membrane. The catalysed reaction is Ca(2+)(in) = Ca(2+)(out). Acts as a modulatory subunit rather than a functional channel. Unlike other P2XRs members, P2RX6 does not seem to form functional homotrimers. P2RX6 requires the presence of P2RX4 or P2RX2 to form functional heterotrimeric receptors at the plasma membrane. P2RX6 can be translocated to the nucleus, where it interacts with the splicing factor (SF3A1), to reduce the incidence of mRNA splicing. May function as a nuclear regulator of post-transcriptional modifications in neurons. The chain is P2X purinoceptor 6 (P2rx6) from Mus musculus (Mouse).